Reading from the N-terminus, the 349-residue chain is uncharacterized protein (349 aa).

This is an uncharacterized protein from Archaeoglobus fulgidus (strain ATCC 49558 / DSM 4304 / JCM 9628 / NBRC 100126 / VC-16).